A 319-amino-acid polypeptide reads, in one-letter code: ATP-dependent 6-phosphofructokinase (319 aa).

Gly-11 serves as a coordination point for ATP. 21–25 (RAVVR) contributes to the ADP binding site. Residues 72-73 (RC) and 102-105 (GDGS) each bind ATP. Asp-103 is a Mg(2+) binding site. 125 to 127 (TID) is a binding site for substrate. The active-site Proton acceptor is Asp-127. Arg-154 provides a ligand contact to ADP. Residues Arg-162 and 169-171 (MGR) each bind substrate. Residues 185-187 (GAE), Arg-211, and 213-215 (KKH) each bind ADP. Residues Glu-222, Arg-243, and 249–252 (HVQR) each bind substrate.

Belongs to the phosphofructokinase type A (PFKA) family. ATP-dependent PFK group I subfamily. Prokaryotic clade 'B1' sub-subfamily. In terms of assembly, homotetramer. Mg(2+) is required as a cofactor.

The protein localises to the cytoplasm. It carries out the reaction beta-D-fructose 6-phosphate + ATP = beta-D-fructose 1,6-bisphosphate + ADP + H(+). The protein operates within carbohydrate degradation; glycolysis; D-glyceraldehyde 3-phosphate and glycerone phosphate from D-glucose: step 3/4. Its activity is regulated as follows. Allosterically activated by ADP and other diphosphonucleosides, and allosterically inhibited by phosphoenolpyruvate. Catalyzes the phosphorylation of D-fructose 6-phosphate to fructose 1,6-bisphosphate by ATP, the first committing step of glycolysis. The sequence is that of ATP-dependent 6-phosphofructokinase from Geobacillus kaustophilus (strain HTA426).